The sequence spans 517 residues: Crotonobetaine/carnitine--CoA ligase (517 aa).

Belongs to the ATP-dependent AMP-binding enzyme family.

It catalyses the reaction 4-(trimethylamino)butanoate + ATP + CoA = 4-(trimethylamino)butanoyl-CoA + AMP + diphosphate. The catalysed reaction is crotonobetaine + ATP + CoA = crotonobetainyl-CoA + AMP + diphosphate. The enzyme catalyses (R)-carnitine + ATP + CoA = (R)-carnitinyl-CoA + AMP + diphosphate. It participates in amine and polyamine metabolism; carnitine metabolism. Its function is as follows. Catalyzes the transfer of CoA to carnitine, generating the initial carnitinyl-CoA needed for the CaiB reaction cycle. Also has activity toward crotonobetaine and gamma-butyrobetaine. In Escherichia coli O127:H6 (strain E2348/69 / EPEC), this protein is Crotonobetaine/carnitine--CoA ligase.